A 369-amino-acid chain; its full sequence is Glutamate 5-kinase (369 aa).

ATP is bound at residue Lys-9. Ser-49, Asp-136, and Asn-148 together coordinate substrate. ATP is bound by residues 168–169 and 210–216; these read TD and TGGMLTK. Positions 275–355 constitute a PUA domain; that stretch reads QGSIWVDKGA…KGVLIYRDDW (81 aa).

The protein belongs to the glutamate 5-kinase family.

The protein resides in the cytoplasm. It catalyses the reaction L-glutamate + ATP = L-glutamyl 5-phosphate + ADP. It participates in amino-acid biosynthesis; L-proline biosynthesis; L-glutamate 5-semialdehyde from L-glutamate: step 1/2. Catalyzes the transfer of a phosphate group to glutamate to form L-glutamate 5-phosphate. This is Glutamate 5-kinase from Streptococcus pneumoniae serotype 2 (strain D39 / NCTC 7466).